The primary structure comprises 536 residues: Phosphoenolpyruvate carboxykinase (ATP) (536 aa).

Substrate contacts are provided by R61, Y195, and K201. ATP-binding positions include K201, H220, and 236-244 (GLSGTGKTT). 2 residues coordinate Mn(2+): K201 and H220. Position 257 (D257) interacts with Mn(2+). ATP-binding residues include E285, R322, and T447. R322 serves as a coordination point for substrate.

The protein belongs to the phosphoenolpyruvate carboxykinase (ATP) family. The cofactor is Mn(2+).

The protein resides in the cytoplasm. The catalysed reaction is oxaloacetate + ATP = phosphoenolpyruvate + ADP + CO2. It functions in the pathway carbohydrate biosynthesis; gluconeogenesis. In terms of biological role, involved in the gluconeogenesis. Catalyzes the conversion of oxaloacetate (OAA) to phosphoenolpyruvate (PEP) through direct phosphoryl transfer between the nucleoside triphosphate and OAA. This Sinorhizobium medicae (strain WSM419) (Ensifer medicae) protein is Phosphoenolpyruvate carboxykinase (ATP).